The following is a 271-amino-acid chain: Type III pantothenate kinase (271 aa).

Aspartate 6–valine 13 contributes to the ATP binding site. Glycine 109–arginine 112 contributes to the substrate binding site. Residue aspartate 111 is the Proton acceptor of the active site. K(+) is bound at residue aspartate 131. An ATP-binding site is contributed by serine 134. Threonine 186 serves as a coordination point for substrate.

This sequence belongs to the type III pantothenate kinase family. In terms of assembly, homodimer. Requires NH4(+) as cofactor. K(+) is required as a cofactor.

It is found in the cytoplasm. It carries out the reaction (R)-pantothenate + ATP = (R)-4'-phosphopantothenate + ADP + H(+). Its pathway is cofactor biosynthesis; coenzyme A biosynthesis; CoA from (R)-pantothenate: step 1/5. In terms of biological role, catalyzes the phosphorylation of pantothenate (Pan), the first step in CoA biosynthesis. This chain is Type III pantothenate kinase, found in Mycobacterium avium (strain 104).